Consider the following 119-residue polypeptide: MEANKSMVKLVAFLIILVSSCFQSLTAQDLEIEVSDGLNVLQVHDVSQSFCPGVTKESWPELLGTPAKFAKQIIQKENPKLTNVETLLNGSAFTEDLRCNRVRLFVNLLDIVVQTPKVG.

Positions 1-27 (MEANKSMVKLVAFLIILVSSCFQSLTA) are cleaved as a signal peptide. Residues 28-48 (QDLEIEVSDGLNVLQVHDVSQ) constitute a propeptide that is removed on maturation.

The protein belongs to the protease inhibitor I13 (potato type I serine protease inhibitor) family.

The protein resides in the secreted. This chain is Ethylene-responsive proteinase inhibitor 1, found in Solanum lycopersicum (Tomato).